A 66-amino-acid polypeptide reads, in one-letter code: Large ribosomal subunit protein bL33c (66 aa).

It belongs to the bacterial ribosomal protein bL33 family.

It localises to the plastid. It is found in the chloroplast. The chain is Large ribosomal subunit protein bL33c from Coffea arabica (Arabian coffee).